Reading from the N-terminus, the 451-residue chain is Probable plasmid replicative DNA helicase (451 aa).

In terms of domain architecture, SF4 helicase spans 194 to 451 (QNSFFDAFPT…SKFSAIKKVW (258 aa)). 225–232 (ARPSIGKT) lines the ATP pocket.

It belongs to the helicase family. DnaB subfamily. As to quaternary structure, homohexamer.

The catalysed reaction is Couples ATP hydrolysis with the unwinding of duplex DNA at the replication fork by translocating in the 5'-3' direction. This creates two antiparallel DNA single strands (ssDNA). The leading ssDNA polymer is the template for DNA polymerase III holoenzyme which synthesizes a continuous strand.. It carries out the reaction ATP + H2O = ADP + phosphate + H(+). Its function is as follows. A replicative DNA helicase, it participates in initiation and elongation during DNA replication. Travels ahead of the DNA replisome, separating dsDNA into templates for DNA synthesis. A processive ATP-dependent 5'-3' DNA helicase it has DNA-dependent ATPase activity. The plasmid this protein is encoded on is thought to be required for growth within mammalian cells. In Chlamydia trachomatis serovar L2 (strain ATCC VR-902B / DSM 19102 / 434/Bu), this protein is Probable plasmid replicative DNA helicase.